Consider the following 668-residue polypeptide: Kelch repeat-containing protein ARB_01230 (668 aa).

An N-terminal signal peptide occupies residues 1 to 32 (MEVGRFASKSASMTYLLLVLLVGFILPQQGQH). The Extracellular segment spans residues 33 to 522 (AHARTLARRD…GSGSDGPNIA (490 aa)). A glycan (N-linked (GlcNAc...) asparagine) is linked at asparagine 60. Kelch repeat units lie at residues 62 to 108 (TLYI…PRGD) and 125 to 176 (SLFL…ANIP). N-linked (GlcNAc...) asparagine glycosylation is found at asparagine 251 and asparagine 291. 4 Kelch repeats span residues 283–331 (ILGL…AVAA), 340–395 (QVYL…IWNS), 396–445 (QIVV…ASQT), and 463–509 (VQSV…GPHA). Residues 523-543 (AIVAGVIAGCLGVLAIYLGFV) form a helical membrane-spanning segment. Over 544–668 (TWLYRRRLAI…PRQTLRVINQ (125 aa)) the chain is Cytoplasmic. A disordered region spans residues 611-642 (DNQRHNHTRSSSGGNFDHLAQPERPSTSSSVE).

It is found in the membrane. It localises to the secreted. In Arthroderma benhamiae (strain ATCC MYA-4681 / CBS 112371) (Trichophyton mentagrophytes), this protein is Kelch repeat-containing protein ARB_01230.